The following is a 218-amino-acid chain: GTP cyclohydrolase 1 (218 aa).

Positions 109, 112, and 180 each coordinate Zn(2+).

It belongs to the GTP cyclohydrolase I family. In terms of assembly, toroid-shaped homodecamer, composed of two pentamers of five dimers.

It carries out the reaction GTP + H2O = 7,8-dihydroneopterin 3'-triphosphate + formate + H(+). It functions in the pathway cofactor biosynthesis; 7,8-dihydroneopterin triphosphate biosynthesis; 7,8-dihydroneopterin triphosphate from GTP: step 1/1. This chain is GTP cyclohydrolase 1, found in Haemophilus ducreyi (strain 35000HP / ATCC 700724).